Consider the following 147-residue polypeptide: UPAR/Ly6 domain-containing protein CG9338 (147 aa).

Positions M1 to A23 are cleaved as a signal peptide. At I24–T126 the chain is on the extracellular side. Cystine bridges form between C26/C72, C29/C37, C51/C89, C101/C115, and C118/C123. N-linked (GlcNAc...) asparagine glycosylation occurs at N68. N124 is lipidated: GPI-anchor amidated asparagine. A propeptide spans G125–A147 (removed in mature form). The chain crosses the membrane as a helical span at residues S127–A147.

This sequence belongs to the quiver family.

The protein localises to the cell membrane. Functionally, may be involved in regulating neuron excitability. The polypeptide is UPAR/Ly6 domain-containing protein CG9338 (Drosophila melanogaster (Fruit fly)).